The chain runs to 300 residues: DNA repair protein RecO (300 aa).

This sequence belongs to the RecO family.

Functionally, involved in DNA repair and RecF pathway recombination. The polypeptide is DNA repair protein RecO (Nostoc punctiforme (strain ATCC 29133 / PCC 73102)).